We begin with the raw amino-acid sequence, 199 residues long: Fe/S biogenesis protein NfuA (199 aa).

Positions 151 and 154 each coordinate [4Fe-4S] cluster.

The protein belongs to the NfuA family. In terms of assembly, homodimer. It depends on [4Fe-4S] cluster as a cofactor.

Involved in iron-sulfur cluster biogenesis. Binds a 4Fe-4S cluster, can transfer this cluster to apoproteins, and thereby intervenes in the maturation of Fe/S proteins. Could also act as a scaffold/chaperone for damaged Fe/S proteins. In Stenotrophomonas maltophilia (strain K279a), this protein is Fe/S biogenesis protein NfuA.